The sequence spans 85 residues: Small ribosomal subunit protein bS16 (85 aa).

This sequence belongs to the bacterial ribosomal protein bS16 family.

This is Small ribosomal subunit protein bS16 from Xanthomonas euvesicatoria pv. vesicatoria (strain 85-10) (Xanthomonas campestris pv. vesicatoria).